The sequence spans 1091 residues: Self-sufficient cytochrome P450 monooxygenase CYP505E1 (1091 aa).

Position 433 (Cys-433) interacts with heme. A Flavodoxin-like domain is found at 528–669 (ICFFYGSNSG…DLEAWEETSL (142 aa)). FMN is bound by residues 534 to 538 (SNSGT) and 613 to 645 (VFGC…TRLA). One can recognise an FAD-binding FR-type domain in the interval 707–935 (KDLMEARVTT…RPAKEAFHLP (229 aa)).

It in the N-terminal section; belongs to the cytochrome P450 family. FAD is required as a cofactor. FMN serves as cofactor. The cofactor is heme.

The catalysed reaction is 2 oxidized [cytochrome P450] + NADPH = 2 reduced [cytochrome P450] + NADP(+) + H(+). The enzyme catalyses an organic molecule + reduced [NADPH--hemoprotein reductase] + O2 = an alcohol + oxidized [NADPH--hemoprotein reductase] + H2O + H(+). It carries out the reaction dodecanoate + reduced [NADPH--hemoprotein reductase] + O2 = 5-hydroxydodecanoate + oxidized [NADPH--hemoprotein reductase] + H2O + H(+). It catalyses the reaction tetradecanoate + reduced [NADPH--hemoprotein reductase] + O2 = 7-hydroxytetradecanoate + oxidized [NADPH--hemoprotein reductase] + H2O + H(+). The catalysed reaction is dodecan-1-ol + reduced [NADPH--hemoprotein reductase] + O2 = 1,5-dodecanediol + oxidized [NADPH--hemoprotein reductase] + H2O + H(+). The enzyme catalyses dodecan-1-ol + reduced [NADPH--hemoprotein reductase] + O2 = 1,4-dodecanediol + oxidized [NADPH--hemoprotein reductase] + H2O + H(+). It carries out the reaction dodecan-1-ol + reduced [NADPH--hemoprotein reductase] + O2 = 1,6-dodecanediol + oxidized [NADPH--hemoprotein reductase] + H2O + H(+). Self-sufficient cytochrome P450 monooxygenase that catalyzes the regioselective in-chain hydroxylation of alkanes, fatty alcohols, and fatty acids at the omega-7 position. Performs hydroxylation of C10-C16 n-alkanes and C12 and C14 fatty alcohols; and thereby enables the one step biocatalytic synthesis of rare alcohols such as 5-dodecanol and 7-tetradecanol. Converts 1-dodecanol into 1,5-dodecanediol as major product with very little sub-terminally hydroxylated products with the 1,4-dodecanediol and 1,6-dodecanediol more abundant. Converts dodecanoic acid to 5-hydroxydodecanoic acid which can be further converted into delta-dodecalactone by lactonization of the 5-hydroxy acid at low pH. Also gives sub-terminal hydroxylation of dodecanoic acid with 9-hydroxydodecanoic acid being the second most abundant product. The polypeptide is Self-sufficient cytochrome P450 monooxygenase CYP505E1 (Aspergillus niger (strain ATCC MYA-4892 / CBS 513.88 / FGSC A1513)).